The sequence spans 90 residues: CRISPR-associated endonuclease Cas2 2 (90 aa).

Aspartate 11 is a Mg(2+) binding site.

Belongs to the CRISPR-associated endoribonuclease Cas2 protein family. As to quaternary structure, homodimer, forms a heterotetramer with a Cas1 homodimer. The cofactor is Mn(2+). Requires Mg(2+) as cofactor.

Inhibited by EDTA and at pH 6.0. Its function is as follows. CRISPR (clustered regularly interspaced short palindromic repeat), is an adaptive immune system that provides protection against mobile genetic elements (viruses, transposable elements and conjugative plasmids). CRISPR clusters contain sequences complementary to antecedent mobile elements and target invading nucleic acids. CRISPR clusters are transcribed and processed into CRISPR RNA (crRNA). Involved in the integration of spacer DNA into the CRISPR cassette. Functions as a dsDNA endonuclease and as a weak ssRNase. The polypeptide is CRISPR-associated endonuclease Cas2 2 (cas2b) (Thermus thermophilus (strain ATCC BAA-163 / DSM 7039 / HB27)).